The sequence spans 361 residues: tRNA-specific 2-thiouridylase MnmA (361 aa).

ATP is bound by residues glycine 11 to serine 18 and methionine 37. Residues asparagine 97–aspartate 99 are interaction with target base in tRNA. Cysteine 102 acts as the Nucleophile in catalysis. A disulfide bridge links cysteine 102 with cysteine 199. Residue glycine 126 coordinates ATP. The interval lysine 149–glutamine 151 is interaction with tRNA. Cysteine 199 acts as the Cysteine persulfide intermediate in catalysis. The tract at residues arginine 311–tyrosine 312 is interaction with tRNA.

It belongs to the MnmA/TRMU family.

The protein localises to the cytoplasm. It catalyses the reaction S-sulfanyl-L-cysteinyl-[protein] + uridine(34) in tRNA + AH2 + ATP = 2-thiouridine(34) in tRNA + L-cysteinyl-[protein] + A + AMP + diphosphate + H(+). Catalyzes the 2-thiolation of uridine at the wobble position (U34) of tRNA, leading to the formation of s(2)U34. The chain is tRNA-specific 2-thiouridylase MnmA from Cupriavidus taiwanensis (strain DSM 17343 / BCRC 17206 / CCUG 44338 / CIP 107171 / LMG 19424 / R1) (Ralstonia taiwanensis (strain LMG 19424)).